We begin with the raw amino-acid sequence, 312 residues long: MVFGSRPPALTEANIGDQSGKVFIVTGATSGYGLLLSTYLYQNNGTVYLAARNAKKTAEVIADLKQRFPASRGRLDSISLNLSDLSTIKKSAEEFLAKETRLHVLWNNAGVMFPPAGSTTSQGYELQLGTNNVGPHLFTKLLYPTLAATAKEAPKNTVRVVWVSSDAASWAPKPAIDFNNLDYRRNESDRSKYGRSKAGTVMQAVELARRARKDGSGIVSIALDPGIANTGLQRDMGRLMSTMVKLIANKPEIGAYTQLFAGLSPEITAEVAEKEWVVPPGKIGCPRRDLFTDTETSRKWWEWNEEQVKAYL.

NADP(+)-binding residues include K56, N108, and K140. Residue S164 is the Proton donor of the active site. NADP(+) contacts are provided by Y193 and K197. Residue Y193 is the Proton acceptor of the active site. The Lowers pKa of active site Tyr role is filled by K197.

It belongs to the short-chain dehydrogenases/reductases (SDR) family.

It participates in secondary metabolite biosynthesis. In terms of biological role, short-chain dehydrogenase/reductase; part of the gene cluster that mediates the biosynthesis of aspernidine A, a prenylated isoindolinone. The starting point of the biosynthesis of aspernidin A is the production of orsellinaldehyde by the non-reducing polyketide synthase pkfA. Hydroxylation, methylation of one of the phenol groups, and prenylation, presumably catalyzed by the prenyltransferase pkfE, would be needed to yield aspernidine D. Subsequently, the cytochrome P450 monooxygenase pkfB is responsible for hydroxylation of aspernidine D to yield aspernidine E. The dehydrogenase pkfF may be responsible for further oxidation of aspernidine E to form a dialdehyde intermediate which is further transformed in a series of steps, some of which are enzyme-mediated, to generate aspernidine A. The possibility that additional enzymes outside of the cluster are involved in aspernidine A biosynthesis cannot be excluded. The chain is Short-chain dehydrogenase/reductase pkfC from Emericella nidulans (strain FGSC A4 / ATCC 38163 / CBS 112.46 / NRRL 194 / M139) (Aspergillus nidulans).